A 546-amino-acid chain; its full sequence is MGILFAALLAMTNPHLATGQIHWGNLSKIGVVGTGSASYKVMTQSSHQSLVIKLMPNITAIDNCTKTEIMEYKRLLGTVLKPIREALNAITKNIKPIQSSTTSRRHKRFAGVVLAGAALGVATAAQITAGIALHQSMMNSQAIESLKASLETTNQAIEEIRQAGQEMVLAVQGVQDYINNELVPAMGQLSCEIVGQKLGLKLLRYYTEILSLFGPSLRDPVSAELSIQALSYALGGDINKILEKLGYSGSDLLAILESKGIKAKITYVDIESYFIVLSIAYPSLSEIKGVIVHRLESVSYNIGSQEWYTTVPRYVATQGYLISNFDDTPCAFTPEGTICSQNAIYPMSPLLQECFRGSTRSCARTLVLGSIGNRFILSKGNLIGNCASILCKCYTTGSIISQDPDKILTYIAADQCPVVEVGGVTIQVGSREYSDAVYLHEIDLGPPISLEKLDVGTNLWNAVTKLEKAKDLLDSSDLILENIKGVSVTNTGYILVGVGLIAVVGILIITCCCKKRRTDNKVSTMVLNPGLRPDLTGTSKSYVRSL.

An N-terminal signal peptide occupies residues 1 to 19 (MGILFAALLAMTNPHLATG). The Extracellular segment spans residues 20-491 (QIHWGNLSKI…NIKGVSVTNT (472 aa)). Residues Asn25, Asn57, and Asn63 are each glycosylated (N-linked (GlcNAc...) asparagine; by host). Residues 109 to 133 (FAGVVLAGAALGVATAAQITAGIAL) form a fusion peptide region. A coiled-coil region spans residues 134-162 (HQSMMNSQAIESLKASLETTNQAIEEIRQ). 4 disulfide bridges follow: Cys330/Cys339, Cys354/Cys362, Cys386/Cys391, and Cys393/Cys416. The stretch at 458–483 (NLWNAVTKLEKAKDLLDSSDLILENI) forms a coiled coil. A helical membrane pass occupies residues 492 to 512 (GYILVGVGLIAVVGILIITCC). The Cytoplasmic portion of the chain corresponds to 513–546 (CKKRRTDNKVSTMVLNPGLRPDLTGTSKSYVRSL).

It belongs to the paramyxoviruses fusion glycoprotein family. As to quaternary structure, homotrimer of disulfide-linked F1-F2. In terms of processing, the inactive precursor F0 is glycosylated and proteolytically cleaved into F1 and F2 to be functionally active. The cleavage is mediated by cellular proteases during the transport and maturation of the polypeptide.

The protein resides in the virion membrane. Its subcellular location is the host cell membrane. Functionally, class I viral fusion protein. Under the current model, the protein has at least 3 conformational states: pre-fusion native state, pre-hairpin intermediate state, and post-fusion hairpin state. During viral and plasma cell membrane fusion, the heptad repeat (HR) regions assume a trimer-of-hairpins structure, positioning the fusion peptide in close proximity to the C-terminal region of the ectodomain. The formation of this structure appears to drive apposition and subsequent fusion of viral and plasma cell membranes. Directs fusion of viral and cellular membranes leading to delivery of the nucleocapsid into the cytoplasm. This fusion is pH independent and occurs directly at the outer cell membrane. The trimer of F1-F2 (F protein) probably interacts with HN at the virion surface. Upon HN binding to its cellular receptor, the hydrophobic fusion peptide is unmasked and interacts with the cellular membrane, inducing the fusion between cell and virion membranes. Later in infection, F proteins expressed at the plasma membrane of infected cells could mediate fusion with adjacent cells to form syncytia, a cytopathic effect that could lead to tissue necrosis. The sequence is that of Fusion glycoprotein F0 (F) from Bos indicus (Zebu).